A 471-amino-acid polypeptide reads, in one-letter code: Zinc finger protein 385B (471 aa).

The required for induction of apoptosis stretch occupies residues methionine 1 to leucine 93. The Matrin-type 1 zinc finger occupies serine 34–glutamine 64. Disordered stretches follow at residues glutamine 50 to threonine 92 and histidine 175 to glutamate 275. Low complexity predominate over residues alanine 76–threonine 92. The interval proline 94 to tyrosine 471 is interaction with p53/TP53. A Matrin-type 2 zinc finger spans residues isoleucine 157–alanine 187. Positions alanine 206 to serine 220 are enriched in polar residues. Residues lysine 230–glycine 250 show a composition bias toward low complexity. Polar residues predominate over residues threonine 260–alanine 269. The Matrin-type 3 zinc finger occupies lysine 282–arginine 316. Positions glycine 318–glycine 340 are disordered. A Matrin-type 4 zinc finger spans residues phenylalanine 348 to glycine 378.

In terms of assembly, interacts with p53/TP53; the interaction is direct. Detected in germinal center of lymph node (at protein level). Expressed in spleen, lymph node and tonsil.

The protein resides in the nucleus. Functionally, may play a role in p53/TP53-mediated apoptosis. This Homo sapiens (Human) protein is Zinc finger protein 385B (ZNF385B).